Consider the following 242-residue polypeptide: Small ribosomal subunit protein uS2 (242 aa).

The protein belongs to the universal ribosomal protein uS2 family.

This Neisseria meningitidis serogroup C (strain 053442) protein is Small ribosomal subunit protein uS2.